Consider the following 192-residue polypeptide: Early nodulin-like protein 7 (192 aa).

Residues 1 to 27 (MMMMMMRSTCNLTLMLCICALVVASMA) form the signal peptide. A Phytocyanin domain is found at 32 to 134 (RDFKVGDEFG…GQRLIVEVMH (103 aa)). N-linked (GlcNAc...) asparagine glycans are attached at residues N48, N89, and N101. C88 and C122 are joined by a disulfide. Residue S166 is the site of GPI-anchor amidated serine attachment. Residues 167–192 (AASSLPTACLLIPLFLTIASFRFISY) constitute a propeptide, removed in mature form.

The protein belongs to the early nodulin-like (ENODL) family. Mostly expressed in flowers, and, to a lower extent, in seeds, but barely in seedlings, stems, leaves and roots.

The protein resides in the cell membrane. Functionally, may act as a carbohydrate transporter. In Arabidopsis thaliana (Mouse-ear cress), this protein is Early nodulin-like protein 7.